Consider the following 23-residue polypeptide: Potassium channel toxin kappa-KTx 1.2 (23 aa).

2 disulfides stabilise this stretch: cysteine 4–cysteine 22 and cysteine 8–cysteine 18. Cysteine amide is present on cysteine 22.

Belongs to the short scorpion toxin superfamily. Potassium channel inhibitor kappa-KTx family. Kappa-KTx 1 subfamily. The two disulfide isomers globular (C1-C3, C2-C4) and beads (C1-C2, C3-C4) do not show activity on Kv10.1/KCNH1/EAG1. Expressed by the venom gland.

It is found in the secreted. Shows weak blocking activity on voltage-gated potassium channels Kv10.1/KCNH1/EAG1 (IC(50)=26 uM), Kv1.2/KCNA2 (Kd=150 uM), Kv1.3/KCNA3 (Kd=40 uM), Kv1.6/KCNA3 (16.6% inhibition at 40 uM toxin). The block is dose-dependent, voltage-independent, and reversible. Also shows a weak inhibitory activity on the plant pathogen F.culmorum growth (IC(50)=18.8-37.7 uM). The chain is Potassium channel toxin kappa-KTx 1.2 from Chersonesometrus fulvipes (Indian black scorpion).